A 175-amino-acid polypeptide reads, in one-letter code: Peptide deformylase (175 aa).

Residues Cys99 and His141 each contribute to the Fe cation site. Glu142 is a catalytic residue. His145 is a Fe cation binding site.

The protein belongs to the polypeptide deformylase family. It depends on Fe(2+) as a cofactor.

It catalyses the reaction N-terminal N-formyl-L-methionyl-[peptide] + H2O = N-terminal L-methionyl-[peptide] + formate. Its function is as follows. Removes the formyl group from the N-terminal Met of newly synthesized proteins. Requires at least a dipeptide for an efficient rate of reaction. N-terminal L-methionine is a prerequisite for activity but the enzyme has broad specificity at other positions. This chain is Peptide deformylase, found in Rickettsia akari (strain Hartford).